The primary structure comprises 416 residues: Pentraxin fusion protein (416 aa).

The signal sequence occupies residues 1-14; the sequence is MKSLLLFLKSQVFG. Residue Asn-129 is glycosylated (N-linked (GlcNAc...) asparagine). Residues 184–206 are disordered; it reads GTEASDSSESVDGTEAPASPESD. A Pentraxin (PTX) domain is found at 220-416; the sequence is TNKSFMFPKE…YSMIGNVAEV (197 aa). Asn-221 carries an N-linked (GlcNAc...) asparagine glycan. Residues Cys-251 and Cys-311 are joined by a disulfide bond. Positions 275, 353, 354, and 364 each coordinate Ca(2+).

Ca(2+) serves as cofactor.

This chain is Pentraxin fusion protein (pxn1), found in Xenopus laevis (African clawed frog).